Here is a 461-residue protein sequence, read N- to C-terminus: METLFNGTLTVGGRDQETTGFAWWAGNARLINLSGKLLGAHVAHAGLIVFWAGAMNLFEVSHFVPEKPMYEQGLILLPHIASLGYGVGPGGEVIDTFPYFVSGVLHLISSAVLGFGGVYHSLIGPETLEESFPFFGYIWKDKNKMTSILGYHLIMLGCGAWLLVLKAMYFGGIYDTWAPGGGDVRIITNPTTNFATIFGYLLRSPFGGDGWICSVDNLEDIIGGHIWIGTLCIFGGIWHIYTTPWPWARRAFVWSGEAYLSYSLGAIATMGFIACCFSWFNNTAYPSEFYGPTGPEASQAQAFTFLVRDQRLGANVASAQGPTGLGKYLMRSPTGEIIFGGETMRFWDFRGPWCEPLRGPNGLDLNKLKNDIQPWQERRAAEYMTHAPLGSLNSVGGVATEINAVNFVSPRSWLATSHFVLGFFFFVGHLWHAGRARAAAAGFEKGIDRVDEPVLSMRPLD.

The propeptide occupies 1 to 2 (ME). Position 3 is an N-acetylthreonine (Thr3). Thr3 is subject to Phosphothreonine. 5 helical membrane-spanning segments follow: residues 57-81 (LFEV…PHIA), 122-143 (LIGP…KDKN), 166-188 (KAMY…RIIT), 243-263 (TPWP…LSYS), and 279-300 (WFNN…ASQA). A [CaMn4O5] cluster-binding site is contributed by Glu355. Residues 435–459 (RARAAAAGFEKGIDRVDEPVLSMRP) form a helical membrane-spanning segment.

The protein belongs to the PsbB/PsbC family. PsbC subfamily. As to quaternary structure, PSII is composed of 1 copy each of membrane proteins PsbA, PsbB, PsbC, PsbD, PsbE, PsbF, PsbH, PsbI, PsbJ, PsbK, PsbL, PsbM, PsbT, PsbX, PsbY, PsbZ, Psb30/Ycf12, at least 3 peripheral proteins of the oxygen-evolving complex and a large number of cofactors. It forms dimeric complexes. Requires Binds multiple chlorophylls and provides some of the ligands for the Ca-4Mn-5O cluster of the oxygen-evolving complex. It may also provide a ligand for a Cl- that is required for oxygen evolution. PSII binds additional chlorophylls, carotenoids and specific lipids. as cofactor.

It localises to the plastid. The protein resides in the chloroplast thylakoid membrane. One of the components of the core complex of photosystem II (PSII). It binds chlorophyll and helps catalyze the primary light-induced photochemical processes of PSII. PSII is a light-driven water:plastoquinone oxidoreductase, using light energy to abstract electrons from H(2)O, generating O(2) and a proton gradient subsequently used for ATP formation. This Chlamydomonas moewusii (Chlamydomonas eugametos) protein is Photosystem II CP43 reaction center protein.